Here is a 499-residue protein sequence, read N- to C-terminus: MQSSSAGGSSHMQVQKLPTGIEGFDDICHGGLPSGRSTLISGTSGTGKTVFSLHFLHNGITQFDEPGIFVTFEESPSDILRNSASFGWNLQEMVEQDKLFILDASPDPDGQDVAGSFDLSGLIERINYAIVKYKAKRVAIDSMTAVFQQYDAISVVRREIFRLIARLKVIGVTTVMTTERIDEYGPIARYGVEEFVSDNVVILRNVLETEKRRRTVEILKLRGTTHMKGEFPFTMGTHGVSVFPLGAMRLTQRSSNVRISSGVPNLDEMCGGGFFKDSIILVTGATGTGKTLLVSKFIEDAFRNQERAILFAYEESRAQLLRNATSWGIDFEEMERQGLLKIICAYPESTGLEDHLEIIKTAIGQFKPSRMAIDSLSALARGVSLNAFRQFVIGVTGYAKQEEIAGFFTNTAEEFMGSHSITDSHISTITDTILLLQYVEIRGEMARAVNVFKMRGSWHDKRIREYVITDNGPQIKDSFSNFERIFSGAPHRITDDERA.

KaiC domains lie at 1-243 (MQSS…VSVF) and 257-499 (VRIS…DERA). Positions 45, 46, 47, 48, 49, 85, 220, 221, 222, 224, 226, 286, 287, 288, 289, 290, 291, and 292 each coordinate ATP. Threonine 49 provides a ligand contact to Mg(2+). Threonine 291 is a Mg(2+) binding site. Residue glutamate 314 coordinates Mg(2+). Residue tryptophan 327 participates in ATP binding. Phosphoserine; by autocatalysis is present on serine 427. At threonine 428 the chain carries Phosphothreonine; by autocatalysis. Residues arginine 447, lysine 453, methionine 454, arginine 455, serine 457, histidine 459, and lysine 461 each contribute to the ATP site.

The protein belongs to the KaiC family. Homohexamer; hexamerization is dependent on ATP-binding. Component of the KaiBC complex. KaiC interacts with SasA, activating its autokinase function and leading to RpaA activation. Requires Mg(2+) as cofactor. Post-translationally, phosphorylated on serine and threonine residues by autocatalysis. Has a 4 step phosphorylation cycle; the autokinase acts first on Thr-428, then Ser-427. When Ser-427 is modified KaiC switches to an autophosphatase mode, acting first on phospho-Thr-428 then phospho-Ser-427.

The enzyme catalyses L-seryl-[protein] + ATP = O-phospho-L-seryl-[protein] + ADP + H(+). The catalysed reaction is L-threonyl-[protein] + ATP = O-phospho-L-threonyl-[protein] + ADP + H(+). It catalyses the reaction ATP + H2O = ADP + phosphate + H(+). Central component of the KaiBC oscillator complex, which constitutes the main circadian regulator in cyanobacteria. Its composition changes during the circadian cycle to control KaiC phosphorylation. Autophosphorylates and has a weak ATPase activity; ATPase activity defines the circadian period. This is Circadian clock oscillator protein KaiC from Prochlorococcus marinus (strain MIT 9313).